Reading from the N-terminus, the 182-residue chain is MKYFEKRFLDVYRPLYIGVIFLGIILDLVTKFLVILYFEPHRYLEVLGSFFRMTLTFNTGFVFGAFQDNAIPSLIATGIAIVFLIGYRWKNYDLGNPWGWNLVMAGAFGNFLDKFFVKIPGTGFRFGFQPNVGEYIGVVDFLDFDWPDFLLFSRWPAFNVADSCVTIGLTILIFTMKLEEEK.

A run of 4 helical transmembrane segments spans residues 15–35 (LYIG…FLVI), 44–64 (LEVL…FVFG), 65–85 (AFQD…VFLI), and 97–117 (PWGW…KFFV). Residues D140 and D162 contribute to the active site. A helical transmembrane segment spans residues 155–175 (WPAFNVADSCVTIGLTILIFT).

Belongs to the peptidase A8 family.

It is found in the cell inner membrane. The enzyme catalyses Release of signal peptides from bacterial membrane prolipoproteins. Hydrolyzes -Xaa-Yaa-Zaa-|-(S,diacylglyceryl)Cys-, in which Xaa is hydrophobic (preferably Leu), and Yaa (Ala or Ser) and Zaa (Gly or Ala) have small, neutral side chains.. It participates in protein modification; lipoprotein biosynthesis (signal peptide cleavage). This protein specifically catalyzes the removal of signal peptides from prolipoproteins. The sequence is that of Lipoprotein signal peptidase from Leptospira borgpetersenii serovar Hardjo-bovis (strain L550).